Consider the following 523-residue polypeptide: Dynein regulatory complex subunit 3 (523 aa).

5 LRR repeats span residues 44 to 65 (DVLS…WQFE), 66 to 87 (NLRK…ENLA), 88 to 109 (HLVW…DTLV), 110 to 131 (NLED…DALV), and 132 to 153 (KLQV…IYLR). The LRRCT domain maps to 166–204 (NPISEAEDYKMFICAYLPDLMYLDYRRIDDHTKKLAEAK). 2 coiled-coil regions span residues 208–242 (SIDE…AFVE) and 366–391 (MTLE…VDMV).

Belongs to the DRC3 family. As to quaternary structure, component of the nexin-dynein regulatory complex (N-DRC). Interacts with DRC1. Interacts with TCTE1/DRC5. Interacts with DRC7.

It is found in the cytoplasm. The protein localises to the cytoskeleton. The protein resides in the cilium axoneme. It localises to the cell projection. Its subcellular location is the cilium. It is found in the flagellum axoneme. The protein localises to the flagellum. In terms of biological role, component of the nexin-dynein regulatory complex (N-DRC) a key regulator of ciliary/flagellar motility which maintains the alignment and integrity of the distal axoneme and regulates microtubule sliding in motile axonemes. This Homo sapiens (Human) protein is Dynein regulatory complex subunit 3 (DRC3).